Reading from the N-terminus, the 352-residue chain is MASLTDLINLDLSDTTDKFIAEYIWIDAVGGLRSKARTLSGPVDDPTKLPKWNFDGSSTGQGPGDDSEVIIYPQAIFKDPFRRGNHILVMCDTYTPAGEPIPTNKRCNAAKIFSHPDVAAEVPWFGIEQEYTLLKKEVNCPIGCPTGGYPGPQGPYYCGIGADKAFGRDIVDAHYKACLYAGINISGINGEVMPGQWEFQVGPAVGISAGDELWVARYILERITEIAGVVVSLDPKPIPGDWNGAGAHTNYSTKSMRNEGGFEIIKKAIAKLETKHAQHIAAYGEGNERRLTGKHETASIHKFSWGVANRGASVRVGRDTEKEGKGYFEDRRPASNMEPYVVTSMIAETTIL.

The GS beta-grasp domain maps to 19–98; that stretch reads FIAEYIWIDA…VMCDTYTPAG (80 aa). A GS catalytic domain is found at 105 to 352; that stretch reads KRCNAAKIFS…TSMIAETTIL (248 aa).

It belongs to the glutamine synthetase family. In terms of assembly, homooctamer.

Its subcellular location is the cytoplasm. The enzyme catalyses L-glutamate + NH4(+) + ATP = L-glutamine + ADP + phosphate + H(+). This chain is Glutamine synthetase cytosolic isozyme (GLN1), found in Daucus carota (Wild carrot).